The sequence spans 261 residues: Thioesterase AMT4 (261 aa).

Belongs to the AMT4 thioesterase family.

It participates in mycotoxin biosynthesis. Its function is as follows. Thioesterase; part of the gene clusters that mediate the biosynthesis of AM-toxins, host-selective toxins (HSTs) causing Alternaria blotch on apple, a worldwide distributed disease. AM-toxins are cyclic depsipeptides containing the 3 residues 2-hydroxy-isovaleric acid (2-HIV), dehydroalanine, L-alanine which are common for all 3 AM-toxins I to III. The fourth precursor is L-alpha-amino-methoxyphenyl-valeric acid (L-Amv) for AM-toxin I, L-alpha-amino-phenyl-valeric acid (L-Apv) for AM-toxin II, and L-alpha-amino-hydroxyphenyl-valeric acid (L-Ahv) for AM-toxin III. AM-toxins have two target sites for affecting susceptible apple cells; they cause invagination of the plasma membrane and electrolyte loss and chloroplast disorganization. The non-ribosomal peptide synthetase AMT1 contains 4 catalytic modules and is responsible for activation of each residue in AM-toxin. The aldo-keto reductase AMT2 catalyzes the conversion of 2-keto-isovaleric acid (2-KIV) to 2-hydroxy-isovaleric acid (2-HIV), one of the precursor residues incorporated by AMT1 during AM-toxin biosynthesis, by reduction of its ketone to an alcohol. The cytochrome P450 monooxygenase AMT3 and the thioesterase AMT4 are also important for AM-toxin production, but their exact function within the AM-toxin biosynthesis are not known yet. Up to 21 proteins (including AMT1 to AMT4) are predicted to be involved in AM-toxin biosynthesis since their expression ishighly up-regulated in AM-toxin-producing cultures. The polypeptide is Thioesterase AMT4 (Alternaria alternata (Alternaria rot fungus)).